Consider the following 271-residue polypeptide: Sec-independent protein translocase protein TatC (271 aa).

5 consecutive transmembrane segments (helical) span residues 24–44 (ISVGAIIVGFILCYSFSEQIF), 78–98 (FFAGLFLAMPVLFTQMWLFIA), 112–132 (FLFVTPVLFFMGGTLAYYFVF), 159–179 (LVIKLIIAFGITFELPVGLLL), and 215–235 (FTQVMLAIPIMLMYEISIFFG). The segment at 247–271 (AAEEAQWAADHNVDDDDVDHPEHKA) is disordered.

This sequence belongs to the TatC family. In terms of assembly, the Tat system comprises two distinct complexes: a TatABC complex, containing multiple copies of TatA, TatB and TatC subunits, and a separate TatA complex, containing only TatA subunits. Substrates initially bind to the TatABC complex, which probably triggers association of the separate TatA complex to form the active translocon.

Its subcellular location is the cell inner membrane. Its function is as follows. Part of the twin-arginine translocation (Tat) system that transports large folded proteins containing a characteristic twin-arginine motif in their signal peptide across membranes. Together with TatB, TatC is part of a receptor directly interacting with Tat signal peptides. The protein is Sec-independent protein translocase protein TatC of Magnetococcus marinus (strain ATCC BAA-1437 / JCM 17883 / MC-1).